Here is a 236-residue protein sequence, read N- to C-terminus: Phosphoribosylaminoimidazole-succinocarboxamide synthase (236 aa).

The protein belongs to the SAICAR synthetase family.

It carries out the reaction 5-amino-1-(5-phospho-D-ribosyl)imidazole-4-carboxylate + L-aspartate + ATP = (2S)-2-[5-amino-1-(5-phospho-beta-D-ribosyl)imidazole-4-carboxamido]succinate + ADP + phosphate + 2 H(+). Its pathway is purine metabolism; IMP biosynthesis via de novo pathway; 5-amino-1-(5-phospho-D-ribosyl)imidazole-4-carboxamide from 5-amino-1-(5-phospho-D-ribosyl)imidazole-4-carboxylate: step 1/2. The chain is Phosphoribosylaminoimidazole-succinocarboxamide synthase from Pseudomonas paraeruginosa (strain DSM 24068 / PA7) (Pseudomonas aeruginosa (strain PA7)).